The sequence spans 155 residues: SsrA-binding protein (155 aa).

The interval 135–155 is disordered; that stretch reads KRESLKRRQDQRDIQRAMKNY.

It belongs to the SmpB family.

Its subcellular location is the cytoplasm. Functionally, required for rescue of stalled ribosomes mediated by trans-translation. Binds to transfer-messenger RNA (tmRNA), required for stable association of tmRNA with ribosomes. tmRNA and SmpB together mimic tRNA shape, replacing the anticodon stem-loop with SmpB. tmRNA is encoded by the ssrA gene; the 2 termini fold to resemble tRNA(Ala) and it encodes a 'tag peptide', a short internal open reading frame. During trans-translation Ala-aminoacylated tmRNA acts like a tRNA, entering the A-site of stalled ribosomes, displacing the stalled mRNA. The ribosome then switches to translate the ORF on the tmRNA; the nascent peptide is terminated with the 'tag peptide' encoded by the tmRNA and targeted for degradation. The ribosome is freed to recommence translation, which seems to be the essential function of trans-translation. This is SsrA-binding protein from Trichormus variabilis (strain ATCC 29413 / PCC 7937) (Anabaena variabilis).